Reading from the N-terminus, the 223-residue chain is Ribose-5-phosphate isomerase A (223 aa).

Substrate is bound by residues 28–31 (TGST), 81–84 (DGAD), and 94–97 (KGGG). Glu-103 functions as the Proton acceptor in the catalytic mechanism. Position 121 (Lys-121) interacts with substrate.

It belongs to the ribose 5-phosphate isomerase family. Homodimer.

The catalysed reaction is aldehydo-D-ribose 5-phosphate = D-ribulose 5-phosphate. It functions in the pathway carbohydrate degradation; pentose phosphate pathway; D-ribose 5-phosphate from D-ribulose 5-phosphate (non-oxidative stage): step 1/1. In terms of biological role, catalyzes the reversible conversion of ribose-5-phosphate to ribulose 5-phosphate. This chain is Ribose-5-phosphate isomerase A, found in Herminiimonas arsenicoxydans.